The sequence spans 286 residues: Deleted in azoospermia-like-A (286 aa).

The RRM domain occupies 33 to 114 (NTVFVGGIDI…PAIRKICTYV (82 aa)). Positions 155–180 (ACPYPSSPPMAIQQIPVGCQQPGYFQ) constitute a DAZ domain.

It belongs to the RRM DAZ family. As to quaternary structure, interacts with the C-terminus of pabp1 and with epabp. Prior to oocyte maturation, found in a complex with epabp and pum2 proteins and spdy1 mRNA; pum2 dissociates from the complex during maturation. Germ-line specific. Oocyte mRNA expression is first restricted to the granulo-fibrillar material (GFM) of the mitochondrial cloud and then to the oocyte germ plasm at the vegetal cortex. Remains an mRNA component of the germ plasm until the neurula stage. In 2-8 cell embryos, expressed in the germ plasm matrix between germinal granules and mitochondria. Expressed in primordial germ cells (PGCs) later in embryogenesis. In addition to the ovaries of adult females, expressed in the testis of adult and juvenile males in spermatogonia and spermatocytes. The protein is restricted to the embryonic germ plasm and primordial germ cells.

Its subcellular location is the cytoplasm. Its function is as follows. RNA-binding protein that is required for primordial germ cell (PGC) differentiation and indirectly necessary for the migration of PGCs through the endoderm. May promote meiotic cell division during spermatogenesis. Shows a preference for G- and U-rich RNAs and probably binds the 3'-UTR of target mRNAs. Stimulates the initiation of translation of mRNAs through the recruitment of poly(A)-binding proteins (PABPs). This is Deleted in azoospermia-like-A (dazl-a) from Xenopus laevis (African clawed frog).